We begin with the raw amino-acid sequence, 339 residues long: NADH-quinone oxidoreductase subunit H (339 aa).

The next 9 helical transmembrane spans lie at 10-30, 50-70, 82-102, 115-135, 155-175, 187-207, 235-255, 275-295, and 311-331; these read FPLT…ILCV, PNVV…KLLF, ILFI…WAVI, VGVL…IIAG, ISYE…TGTL, LPWW…ISVL, MGFA…SAMT, IPGF…FLWI, and GWKV…SVLF.

It belongs to the complex I subunit 1 family. In terms of assembly, NDH-1 is composed of 14 different subunits. Subunits NuoA, H, J, K, L, M, N constitute the membrane sector of the complex.

It localises to the cell inner membrane. The catalysed reaction is a quinone + NADH + 5 H(+)(in) = a quinol + NAD(+) + 4 H(+)(out). In terms of biological role, NDH-1 shuttles electrons from NADH, via FMN and iron-sulfur (Fe-S) centers, to quinones in the respiratory chain. The immediate electron acceptor for the enzyme in this species is believed to be ubiquinone. Couples the redox reaction to proton translocation (for every two electrons transferred, four hydrogen ions are translocated across the cytoplasmic membrane), and thus conserves the redox energy in a proton gradient. This subunit may bind ubiquinone. In Rickettsia typhi (strain ATCC VR-144 / Wilmington), this protein is NADH-quinone oxidoreductase subunit H.